A 398-amino-acid polypeptide reads, in one-letter code: 1-deoxy-D-xylulose 5-phosphate reductoisomerase (398 aa).

NADPH contacts are provided by threonine 10, glycine 11, serine 12, isoleucine 13, glycine 36, lysine 37, asparagine 38, and asparagine 124. Residue lysine 125 participates in 1-deoxy-D-xylulose 5-phosphate binding. Glutamate 126 serves as a coordination point for NADPH. Aspartate 150 contributes to the Mn(2+) binding site. 1-deoxy-D-xylulose 5-phosphate contacts are provided by serine 151, glutamate 152, serine 186, and histidine 209. Residue glutamate 152 participates in Mn(2+) binding. NADPH is bound at residue glycine 215. Positions 222, 227, 228, and 231 each coordinate 1-deoxy-D-xylulose 5-phosphate. Glutamate 231 contributes to the Mn(2+) binding site.

This sequence belongs to the DXR family. In terms of assembly, homodimer. It depends on Mg(2+) as a cofactor. Mn(2+) serves as cofactor. The cofactor is Co(2+).

It catalyses the reaction 2-C-methyl-D-erythritol 4-phosphate + NADP(+) = 1-deoxy-D-xylulose 5-phosphate + NADPH + H(+). Its pathway is isoprenoid biosynthesis; isopentenyl diphosphate biosynthesis via DXP pathway; isopentenyl diphosphate from 1-deoxy-D-xylulose 5-phosphate: step 1/6. Inhibited by fosmidomycin. Its function is as follows. Catalyzes the NADPH-dependent rearrangement and reduction of 1-deoxy-D-xylulose-5-phosphate (DXP) to 2-C-methyl-D-erythritol 4-phosphate (MEP). This Escherichia coli (strain K12) protein is 1-deoxy-D-xylulose 5-phosphate reductoisomerase (dxr).